A 298-amino-acid chain; its full sequence is uncharacterized protein (298 aa).

Helical transmembrane passes span 5–25 (SLATLFALLILATLINRFLLW), 52–72 (VISGPRWMTLTFFALISFLAL), 105–125 (LFLLFIPLAGFLILATGQVLV), 138–158 (IFWGWIMTVFALSHAAWLLML), 163–183 (IQGGALLVLFLLALTESNDIA), 208–228 (GLMGGVITIMIASLIIGPLLT), 236–256 (LLAGLLIGISGFCGDVVMSAI), and 273–293 (GGLLDRIDSLIFTAPVFFYFI).

The protein belongs to the CDS family.

It localises to the cell membrane. This is an uncharacterized protein from Escherichia coli (strain K12).